Consider the following 187-residue polypeptide: Large ribosomal subunit protein uL5 (187 aa).

This sequence belongs to the universal ribosomal protein uL5 family. As to quaternary structure, part of the 50S ribosomal subunit; part of the 5S rRNA/L5/L18/L25 subcomplex. Contacts the 5S rRNA and the P site tRNA. Forms a bridge to the 30S subunit in the 70S ribosome.

Its function is as follows. This is one of the proteins that bind and probably mediate the attachment of the 5S RNA into the large ribosomal subunit, where it forms part of the central protuberance. In the 70S ribosome it contacts protein S13 of the 30S subunit (bridge B1b), connecting the 2 subunits; this bridge is implicated in subunit movement. Contacts the P site tRNA; the 5S rRNA and some of its associated proteins might help stabilize positioning of ribosome-bound tRNAs. This Nocardia farcinica (strain IFM 10152) protein is Large ribosomal subunit protein uL5.